The primary structure comprises 140 residues: Pro-vaccinia growth factor (140 aa).

Positions 1-18 (MSMKYLMLLFAAMIIRSF) are cleaved as a signal peptide. At 19–100 (ADSGNAIETT…SENPNTTTSY (82 aa)) the chain is on the extracellular side. Residue N34 is glycosylated (N-linked (GlcNAc...) asparagine; by host). Residues 41 to 81 (AIRLCGPEGDGYCLHGDCIHARDIDGMYCRCSHGYTGIRCQ) enclose the EGF-like domain. 3 cysteine pairs are disulfide-bonded: C45/C58, C53/C69, and C71/C80. Residue N95 is glycosylated (N-linked (GlcNAc...) asparagine; by host). A helical transmembrane segment spans residues 101–121 (IPSPGIVLVLVGIIIITCCSL). Residues 122–140 (SVYRFTRRTKLPIQDMVVP) are Cytoplasmic-facing.

The protein belongs to the orthopoxvirus OPG019 family. In terms of assembly, vaccinia growth factor interacts with host EGFR and promotes EGFR dimerization.

The protein localises to the host membrane. It localises to the secreted. Functionally, stimulates cellular proliferation (hyperplasia)and mobility around infected cells to promote rapid and efficient spread of infection. This effect is beneficial for virus replication in vivo, because poxviruses replicate possibly better in proliferating cells than in quiescent cells. Acts by binding host EGFR, inducing its dimerization, autophosphorylation and leading to activation of several cellular pathways regulating cell proliferation or cell survival. The activation by host EGFR of mitogen activated protein kinases (MAPK) and extracellular-signal regulated kinases (ERK) are essential for the positive effect of vaccinia growth factor on poxvirus virulence in vivo. The polypeptide is Pro-vaccinia growth factor (OPG019) (Vaccinia virus (strain L-IVP) (VACV)).